A 424-amino-acid polypeptide reads, in one-letter code: Histidine--tRNA ligase (424 aa).

It belongs to the class-II aminoacyl-tRNA synthetase family. As to quaternary structure, homodimer.

It is found in the cytoplasm. It catalyses the reaction tRNA(His) + L-histidine + ATP = L-histidyl-tRNA(His) + AMP + diphosphate + H(+). This is Histidine--tRNA ligase from Protochlamydia amoebophila (strain UWE25).